Reading from the N-terminus, the 82-residue chain is Sec-independent protein translocase protein TatA (82 aa).

The chain crosses the membrane as a helical span at residues 1–21 (MGSFSIWHWLIVLLVVVMIFG). The interval 39–82 (FKDGMKDGSTTDAPAASSAPAAQVTGQPANSDKSTIDVEARQKS) is disordered. Positions 51–60 (APAASSAPAA) are enriched in low complexity. The segment covering 62-71 (VTGQPANSDK) has biased composition (polar residues). Basic and acidic residues predominate over residues 72-82 (STIDVEARQKS).

This sequence belongs to the TatA/E family. The Tat system comprises two distinct complexes: a TatABC complex, containing multiple copies of TatA, TatB and TatC subunits, and a separate TatA complex, containing only TatA subunits. Substrates initially bind to the TatABC complex, which probably triggers association of the separate TatA complex to form the active translocon.

The protein localises to the cell inner membrane. Its function is as follows. Part of the twin-arginine translocation (Tat) system that transports large folded proteins containing a characteristic twin-arginine motif in their signal peptide across membranes. TatA could form the protein-conducting channel of the Tat system. This chain is Sec-independent protein translocase protein TatA, found in Variovorax paradoxus (strain S110).